The following is a 114-amino-acid chain: Hydrogenase maturation factor HypA (114 aa).

H2 is a binding site for Ni(2+). 4 residues coordinate Zn(2+): C73, C76, C89, and C92.

Belongs to the HypA/HybF family.

In terms of biological role, involved in the maturation of [NiFe] hydrogenases. Required for nickel insertion into the metal center of the hydrogenase. The sequence is that of Hydrogenase maturation factor HypA from Azoarcus sp. (strain BH72).